Consider the following 175-residue polypeptide: MLTMAEKRNIFLVGPMGAGKSTIGRHLAQQLHMEFFDSDTVIEDRTGADISWVFDVEGEEGFRVREEGVIDDLTQEQGIVLATGGGSVVSKENRNRLSARGVVVYLETTIEKQLARTQRDKKRPLLQTDAPREVLEALAAERNPMYEEVSDYVVRTDDQSAKVVANQIINMLEER.

ATP is bound at residue 17–22; that stretch reads GAGKST. Ser-21 is a Mg(2+) binding site. Positions 39, 63, and 85 each coordinate substrate. Arg-123 serves as a coordination point for ATP. Arg-142 provides a ligand contact to substrate. Gln-159 is a binding site for ATP.

This sequence belongs to the shikimate kinase family. As to quaternary structure, monomer. It depends on Mg(2+) as a cofactor.

The protein resides in the cytoplasm. It carries out the reaction shikimate + ATP = 3-phosphoshikimate + ADP + H(+). Its pathway is metabolic intermediate biosynthesis; chorismate biosynthesis; chorismate from D-erythrose 4-phosphate and phosphoenolpyruvate: step 5/7. Catalyzes the specific phosphorylation of the 3-hydroxyl group of shikimic acid using ATP as a cosubstrate. The protein is Shikimate kinase of Photobacterium profundum (strain SS9).